A 146-amino-acid chain; its full sequence is Hemoglobin subunit beta (146 aa).

V1 bears the N-acetylvaline mark. A Globin domain is found at 2 to 146 (HLTGEEKAAV…VANALAHKYH (145 aa)). T12 carries the post-translational modification Phosphothreonine. Phosphoserine is present on S44. Position 59 is an N6-acetyllysine (K59). H63 contacts heme b. K82 carries the post-translational modification N6-acetyllysine. Position 92 (H92) interacts with heme b. S-nitrosocysteine is present on C93. An N6-acetyllysine modification is found at K144.

Belongs to the globin family. As to quaternary structure, heterotetramer of two alpha chains and two beta chains. In terms of tissue distribution, red blood cells.

Involved in oxygen transport from the lung to the various peripheral tissues. In Martes foina (Beech marten), this protein is Hemoglobin subunit beta (HBB).